Here is a 149-residue protein sequence, read N- to C-terminus: MKEALHQIVVRCSELVSSTSLPRLSVSRLQGPPDSQPLGTLGQGGWKLLGIVGSLAPETLGGLGTEFGPCTHPLPFDMVRERERDDELRQGWLLQCPQCARTLLCHCGPFLTPPSQTSSSGFQLCSLKPSGSLVTATEPLSNFAFSYFP.

As to expression, expressed in fetus (aged from 7 to 8 weeks). Weakly expressed in lymphocytes.

The polypeptide is Protein GR6 (Homo sapiens (Human)).